We begin with the raw amino-acid sequence, 663 residues long: MDTDNSTLPTEQSAVRETCDRDVTMSPRKRRRLSVSLEPELTEPEAAGTPGERCSTADTPESTASEPRSLFNSTPTEGNIAPFLTKHIKDQHASRNRFAPIDSSLPRRKADSKYCYRHRPDLKCRRQAAEPTVDQMQRDLSTLSQNDQQSIAHFWSLFSAAPSKHRNLMLQGIVAQCCFPQLSFLSASVRDLIRIDFVTALPPEISFKILSYLDTASLCSAAQVSHSWRALADDDVVWHRMCEQHIDRKCEKCGWGLPMLDRKRLKDTKRQVQLRAAGKEIAPNQRPQQQHRPWKAVYMDRFKVGTNWKYGRCTTTIFRGHTNGVMCLQFDDNILATGSYDATIKIWDIETGKEIRTLRGHESTIRCLQFDDTKLISGSLDRTIKVWNWRSGECISTYTGHQGGVLCLHFDSTTLASGSKDNTIKIWNFHDKSTRILRGHADWVNSVKLDTASRTVFSASDDLTVRIWDLDTGKCIHSYAGHVGQVQQVLPLPREFEFKHQSNCADDRSDRLSGSESPDHRGSHGYGSNNAPDQQPNTSAPPTEPMSPLFEALFTEDQGRPAPPRYMLTAALDLTLRLWEVHTGRCLRTFFGHIEGVWGLAADTLRFVSGAQDHMAKVWDPRTGTCERTFTGHRGPVTCVSLSDSRMATGSEDSEVRMYSFKA.

Composition is skewed to polar residues over residues 1–15 (MDTDNSTLPTEQSAV) and 56–77 (TADTPESTASEPRSLFNSTPTE). The interval 1 to 78 (MDTDNSTLPT…SLFNSTPTEG (78 aa)) is disordered. Residues 195–241 (IDFVTALPPEISFKILSYLDTASLCSAAQVSHSWRALADDDVVWHRM) form the F-box domain. WD repeat units lie at residues 320 to 359 (GHTNGVMCLQFDDNILATGSYDATIKIWDIETGKEIRTLR), 361 to 399 (HESTIRCLQFDDTKLISGSLDRTIKVWNWRSGECISTYT), 400 to 437 (GHQGGVLCLHFDSTTLASGSKDNTIKIWNFHDKSTRIL), and 439 to 480 (GHAD…HSYA). Residues 502 to 522 (SNCADDRSDRLSGSESPDHRG) show a composition bias toward basic and acidic residues. A disordered region spans residues 502 to 547 (SNCADDRSDRLSGSESPDHRGSHGYGSNNAPDQQPNTSAPPTEPMS). Residues 526–541 (YGSNNAPDQQPNTSAP) are compositionally biased toward polar residues. 3 WD repeats span residues 544–589 (EPMS…CLRT), 592–629 (GHIEGVWGLAADTLRFVSGAQDHMAKVWDPRTGTCERT), and 632–663 (GHRGPVTCVSLSDSRMATGSEDSEVRMYSFKA).

The protein belongs to the WD repeat MET30/SCONB/SCON-2 family. As to quaternary structure, component of the SCF(sconB) E3 ubiquitin ligase complex.

It participates in protein modification; protein ubiquitination. In terms of biological role, component of the SCF(sconB) E3 ubiquitin ligase complex involved in the regulation of sulfur metabolite repression, probably by mediating the inactivation or degradation of the metR transcription factor. In Trichophyton verrucosum (strain HKI 0517), this protein is Probable E3 ubiquitin ligase complex SCF subunit sconB (sconB).